The chain runs to 1928 residues: Lactase/phlorizin hydrolase (1928 aa).

The signal sequence occupies residues 1-21 (MELPWTALFLSTVLLGLSCQG). The propeptide at 22 to 867 (SDWESDRNFI…LPVRADFTSR (846 aa)) is XBetaGly. Residues 22 to 1883 (SDWESDRNFI…LMLGIAEAQT (1862 aa)) lie on the Extracellular side of the membrane. A glycosyl hydrolase-1 1; Region I region spans residues 46–289 (NYPPGKQGSD…FIYTLKLEDC (244 aa)). The interval 364–856 (VWAAFANQSR…GFSAKKVKRN (493 aa)) is glycosyl hydrolase-1 2; Region II. N-linked (GlcNAc...) asparagine glycosylation is found at Asn-370, Asn-514, Asn-824, Asn-936, Asn-948, Asn-991, and Asn-1037. The tract at residues 904–1367 (RFRDDFLWGV…DLIANNGMPL (464 aa)) is glycosyl hydrolase-1 3; Region III. Phlorizin hydrolase/Glycosylceramidase activity. The active-site Proton donor; for phlorizin hydrolase/Glycosylceramidase activity is Glu-1067. Asn-1176 and Asn-1240 each carry an N-linked (GlcNAc...) asparagine glycan. The Nucleophile; for phlorizin hydrolase/Glycosylceramidase activity role is filled by Glu-1274. Asn-1281 and Asn-1509 each carry an N-linked (GlcNAc...) asparagine glycan. Residues 1374–1847 (LYGEFPKGFI…CNGFPDPAQG (474 aa)) form a glycosyl hydrolase-1 4; Region IV. Lactase activity region. Glu-1539 (proton donor; for lactase activity) is an active-site residue. 2 N-linked (GlcNAc...) asparagine glycosylation sites follow: Asn-1657 and Asn-1684. Residue Glu-1750 is the Nucleophile; for lactase activity of the active site. 2 N-linked (GlcNAc...) asparagine glycosylation sites follow: Asn-1762 and Asn-1815. A helical transmembrane segment spans residues 1884-1902 (ALYVLFALLLLGACSLAFL). Over 1903-1928 (TYNTGRRSKQGNAQPSQHQLSPISSF) the chain is Cytoplasmic.

It belongs to the glycosyl hydrolase 1 family. Homodimer. In terms of processing, N-glycosylated. In terms of tissue distribution, intestine.

Its subcellular location is the apical cell membrane. It catalyses the reaction lactose + H2O = beta-D-galactose + D-glucose. The catalysed reaction is phlorizin + H2O = phloretin + beta-D-glucose. The enzyme catalyses D-cellobiose + H2O = beta-D-glucose + D-glucose. It carries out the reaction quercetin 4'-O-beta-D-glucoside + H2O = quercetin + beta-D-glucose. It catalyses the reaction quercetin 3-O-beta-D-glucoside + H2O = quercetin + beta-D-glucose. The catalysed reaction is kaempferol 3-O-beta-D-glucoside + H2O = kaempferol + beta-D-glucose. The enzyme catalyses luteolin 7-O-beta-D-glucoside + H2O = luteolin + beta-D-glucose. It carries out the reaction luteolin 4'-O-beta-D-glucoside + H2O = luteolin + beta-D-glucose. It catalyses the reaction (2S)-naringenin 7-O-beta-D-glucoside + H2O = (2S)-naringenin + beta-D-glucose. The catalysed reaction is eriodictyol-7-O-beta-D-glucoside + H2O = (S)-eriodictyol + beta-D-glucose. The enzyme catalyses apigenin 7-O-beta-D-glucoside + H2O = apigenin + beta-D-glucose. It carries out the reaction daidzein 7-O-beta-D-glucoside + H2O = daidzein + beta-D-glucose + H(+). It catalyses the reaction genistein 7-O-beta-D-glucoside + H2O = genistein + beta-D-glucose. The catalysed reaction is a beta-D-galactosyl-N-acylsphingosine + H2O = a ceramide + beta-D-galactose.. The enzyme catalyses beta-D-glucosyl-(1&lt;-&gt;1')-N-hexadecanoylsphing-4-enine + H2O = N-hexadecanoylsphing-4-enine + beta-D-glucose. It carries out the reaction beta-D-galactosyl-(1&lt;-&gt;1')-N-hexadecanoylsphing-4-enine + H2O = beta-D-galactose + N-hexadecanoylsphing-4-enine. It catalyses the reaction beta-D-galactosyl-(1&lt;-&gt;1')-N-hexadecanoylsphinganine + H2O = N-hexadecanoylsphinganine + beta-D-galactose. The catalysed reaction is beta-D-glucosyl-(1&lt;-&gt;1')-N-hexadecanoylsphinganine + H2O = N-hexadecanoylsphinganine + beta-D-glucose. Broad specificity glycosidase of the intestinal brush border membrane that hydrolyzes lactose, the main sugar in mammalian milk, to produce D-glucose and D-galactose. The mature protein is composed of two domains that catalyze the hydrolysis of beta-glucopyranosides and beta-galactopyranosides, with a preference for hydrophilic aglycones (in lactose and cellobiose) for one domain and hydrophobic aglycones (in phlorizin and glycosylceramides) for the other. The chain is Lactase/phlorizin hydrolase from Rattus norvegicus (Rat).